Consider the following 575-residue polypeptide: Homocysteine/cysteine synthase (575 aa).

The residue at position 376 (K376) is an N6-(pyridoxal phosphate)lysine.

The protein belongs to the trans-sulfuration enzymes family. MET7 subfamily. It depends on pyridoxal 5'-phosphate as a cofactor.

Its subcellular location is the cytoplasm. It catalyses the reaction O-acetyl-L-homoserine + methanethiol = L-methionine + acetate + H(+). The enzyme catalyses O-acetyl-L-homoserine + hydrogen sulfide = L-homocysteine + acetate. The catalysed reaction is O-acetyl-L-serine + hydrogen sulfide = L-cysteine + acetate. It participates in amino-acid biosynthesis; L-methionine biosynthesis via de novo pathway; L-homocysteine from O-acetyl-L-homoserine. In terms of biological role, plays a role in inorganic sulfur assimilation during sulfur-limited conditions; catalyzes the conversion of O-acetyl-L-homoserine (OAH) into homocysteine in the methionine biosynthesis pathway. Also catalyzes the conversion of O-acetylserine (OAS) into cysteine, the last step in the cysteine biosynthesis pathway. However, it seems that in S.cerevisiae cysteine biosynthesis occurs exclusively through the cystathionine pathway and not via direct incorporation of sulfur into OAS. It therefore has no metabolic role in cysteine biosynthesis and may only have a regulatory role controlling OAS levels. The sequence is that of Homocysteine/cysteine synthase from Saccharomyces cerevisiae (strain ATCC 204508 / S288c) (Baker's yeast).